Here is a 432-residue protein sequence, read N- to C-terminus: D-amino acid dehydrogenase (432 aa).

Residue 3–17 (VVILGSGVVGVTSAW) coordinates FAD.

This sequence belongs to the DadA oxidoreductase family. FAD serves as cofactor.

The catalysed reaction is a D-alpha-amino acid + A + H2O = a 2-oxocarboxylate + AH2 + NH4(+). Its pathway is amino-acid degradation; D-alanine degradation; NH(3) and pyruvate from D-alanine: step 1/1. In terms of biological role, oxidative deamination of D-amino acids. The polypeptide is D-amino acid dehydrogenase (Escherichia fergusonii (strain ATCC 35469 / DSM 13698 / CCUG 18766 / IAM 14443 / JCM 21226 / LMG 7866 / NBRC 102419 / NCTC 12128 / CDC 0568-73)).